The primary structure comprises 529 residues: Low affinity inorganic phosphate transporter 4 (529 aa).

Residues 1 to 21 (MASDNLVVLNALDTARTQWYH) lie on the Cytoplasmic side of the membrane. Residues 22–42 (VTAVIIAGMGFFTDAYDLFCI) traverse the membrane as a helical segment. Residues 43 to 71 (STVSKLLGRLYYYDPSTKAPGKLPHMANN) lie on the Extracellular side of the membrane. The chain crosses the membrane as a helical span at residues 72 to 92 (WVIGVALVGTLSGQLVFGWLG). Over 93–99 (DKLGRKK) the chain is Cytoplasmic. Residues 100-120 (VYGLTLILMVICALCSGLSLG) traverse the membrane as a helical segment. Topologically, residues 121–125 (YSPKS) are extracellular. Residues 126 to 146 (VIGTLCFFRFWLGFGIGGDYP) traverse the membrane as a helical segment. Topologically, residues 147-161 (LSATIMSEYANKSTR) are cytoplasmic. A helical membrane pass occupies residues 162–182 (GAFIAAVFAMQGVGIIFAGLV). Topologically, residues 183–211 (SMTISKVFLMNFEGKPFNVDEVLSTEPEA) are extracellular. A helical membrane pass occupies residues 212 to 232 (DYVWRIVLMLGALPALLTYYW). Residues 233 to 291 (RMKMPETGRYTAIIEGNAKQAAIDMGKVLDIEIQAEGDKLAQFKAANEYSLLSNEFFQR) lie on the Cytoplasmic side of the membrane. Residues 292–312 (HGLHLIGTMSTWFLLDIAFYS) form a helical membrane-spanning segment. Residues 313-344 (QNLTQKDIFPVMGLTSKANTISALREMFETSR) lie on the Extracellular side of the membrane. Asn-314 carries N-linked (GlcNAc...) asparagine glycosylation. Residues 345-365 (AMFVIALFGTFPGYWFTVFFI) form a helical membrane-spanning segment. The Cytoplasmic portion of the chain corresponds to 366 to 374 (EKIGRFKIQ). A helical membrane pass occupies residues 375-395 (LVGFFMMSVFMAIIGVKYDYL). The Extracellular portion of the chain corresponds to 396–405 (RNKEHKWTFA). A helical transmembrane segment spans residues 406–426 (ALYGLTFFFANFGPNSTTFVL). The Cytoplasmic segment spans residues 427–437 (PAELFPTRVRS). A helical membrane pass occupies residues 438–458 (TCHALSAALGKAGAMISAFGI). The Extracellular segment spans residues 459 to 471 (QQYTQDQDVRKIK). The helical transmembrane segment at 472–492 (TAMLLLAFTNMVGFCCTFLVT) threads the bilayer. The Cytoplasmic portion of the chain corresponds to 493–529 (ETKGRSLEEISGEDGRQNETQMKTTRPVSGHPDDGWE). Residues 501–529 (EISGEDGRQNETQMKTTRPVSGHPDDGWE) are disordered. Over residues 510–519 (NETQMKTTRP) the composition is skewed to polar residues.

It belongs to the major facilitator superfamily. Phosphate:H(+) symporter (TC 2.A.1.9) family.

The protein resides in the cell membrane. It carries out the reaction phosphate(in) + H(+)(in) = phosphate(out) + H(+)(out). Low-affinity transporter for external inorganic phosphate (Pi) probably involved in the acquisition of phosphate released by arbuscular mycorrhizal (AM) fungi (e.g. Rhizophagus irregularis and Glomus intraradices) during AM symbiosis. Acts as a Pi-sensing machinery at the root tip level, independently of AM fungi, involved in the regulation of early root branching and lateral roots formation. The polypeptide is Low affinity inorganic phosphate transporter 4 (Petunia hybrida (Petunia)).